A 226-amino-acid chain; its full sequence is uncharacterized protein (226 aa).

The N-acetyltransferase domain occupies 18–219 (LTIRNYTETD…YGVLMEWKNV (202 aa)).

This sequence belongs to the acetyltransferase family.

This is an uncharacterized protein from Bacillus subtilis (strain 168).